The following is a 930-amino-acid chain: Serine/threonine-protein kinase ATG1 (930 aa).

One can recognise a Protein kinase domain in the interval 23 to 326 (FIIDREIGKG…FENFFAHHVV (304 aa)). ATP is bound by residues 29–37 (IGKGSFAQV) and K52. D166 acts as the Proton acceptor in catalysis. Disordered stretches follow at residues 336–468 (DDIP…TEEE), 504–563 (GQNN…SASP), 853–874 (ISSG…DTEE), and 904–930 (NQAK…YGST). The span at 337 to 350 (DIPKPPKRELETIR) shows a compositional bias: basic and acidic residues. Over residues 377 to 393 (SPKSPRSSPRSSTVNSS) the composition is skewed to low complexity. Polar residues-rich tracts occupy residues 400–417 (RQSQ…HNSG) and 504–531 (GQNN…TTGA). The interval 629-897 (AAQAIEEFAT…RLNMVRKKQQ (269 aa)) is ATG13-binding.

Belongs to the protein kinase superfamily. Ser/Thr protein kinase family. APG1/unc-51/ULK1 subfamily. In terms of assembly, homodimer. Dimerization requires the presence of ATG13. Forms a ternary complex with ATG13 and ATG17.

It localises to the cytoplasm. It is found in the preautophagosomal structure membrane. The enzyme catalyses L-seryl-[protein] + ATP = O-phospho-L-seryl-[protein] + ADP + H(+). The catalysed reaction is L-threonyl-[protein] + ATP = O-phospho-L-threonyl-[protein] + ADP + H(+). Functionally, serine/threonine protein kinase involved in the cytoplasm to vacuole transport (Cvt) and found to be essential in autophagy, where it is required for the formation of autophagosomes. Involved in the clearance of protein aggregates which cannot be efficiently cleared by the proteasome. Required for selective autophagic degradation of the nucleus (nucleophagy) as well as for mitophagy which contributes to regulate mitochondrial quantity and quality by eliminating the mitochondria to a basal level to fulfill cellular energy requirements and preventing excess ROS production. Also involved in endoplasmic reticulum-specific autophagic process, in selective removal of ER-associated degradation (ERAD) substrates. Plays a key role in ATG9 and ATG23 cycling through the pre-autophagosomal structure and is necessary to promote ATG18 binding to ATG9 through phosphorylation of ATG9. Catalyzes phosphorylation of ATG4, decreasing the interaction between ATG4 and ATG8 and impairing deconjugation of PE-conjugated forms of ATG8. Contributes to conidiation by regulating the conidial levels of the conidiation-related protein CP15 and mediates fungal oxidation resistance by controlling total superoxide dismutase (SOD) activity. In Beauveria bassiana (strain ARSEF 2860) (White muscardine disease fungus), this protein is Serine/threonine-protein kinase ATG1.